Here is a 434-residue protein sequence, read N- to C-terminus: Histidinol dehydrogenase (434 aa).

NAD(+) contacts are provided by Y130, Q188, and N211. Substrate is bound by residues S237, Q259, and H262. Q259 and H262 together coordinate Zn(2+). Active-site proton acceptor residues include E326 and H327. Residues H327, D360, E414, and H419 each contribute to the substrate site. D360 is a binding site for Zn(2+). Residue H419 coordinates Zn(2+).

The protein belongs to the histidinol dehydrogenase family. Homodimer. Requires Zn(2+) as cofactor.

It catalyses the reaction L-histidinol + 2 NAD(+) + H2O = L-histidine + 2 NADH + 3 H(+). It participates in amino-acid biosynthesis; L-histidine biosynthesis; L-histidine from 5-phospho-alpha-D-ribose 1-diphosphate: step 9/9. Functionally, catalyzes the sequential NAD-dependent oxidations of L-histidinol to L-histidinaldehyde and then to L-histidine. The polypeptide is Histidinol dehydrogenase (Escherichia coli (strain K12)).